The following is a 153-amino-acid chain: Nuclear cap-binding protein subunit 2 (153 aa).

Residues Tyr-17, Tyr-40, 109-113 (RTDWD), 120-124 (RQYGR), and 130-131 (QV) each bind mRNA. Residues 37 to 115 (CTLYVGNLSF…RIIRTDWDAG (79 aa)) form the RRM domain.

It belongs to the RRM NCBP2 family. Component of the nuclear cap-binding complex (CBC), a heterodimer composed of ncbp1/cbp80 and ncbp2/cbp20 that interacts with m7GpppG-capped RNA.

It is found in the nucleus. The protein localises to the cytoplasm. Functionally, component of the cap-binding complex (CBC), which binds co-transcriptionally to the 5' cap of pre-mRNAs and is involved in various processes such as pre-mRNA splicing, translation regulation, nonsense-mediated mRNA decay, RNA-mediated gene silencing (RNAi) by microRNAs (miRNAs) and mRNA export. The CBC complex is involved in mRNA export from the nucleus, leading to the recruitment of the mRNA export machinery to the 5' end of mRNA and to mRNA export in a 5' to 3' direction through the nuclear pore. The CBC complex is also involved in mediating U snRNA and intronless mRNAs export from the nucleus. The CBC complex is essential for a pioneer round of mRNA translation, before steady state translation when the CBC complex is replaced by cytoplasmic cap-binding protein eIF4E. The pioneer round of mRNA translation mediated by the CBC complex plays a central role in nonsense-mediated mRNA decay (NMD), NMD only taking place in mRNAs bound to the CBC complex, but not on eIF4E-bound mRNAs. The CBC complex enhances NMD in mRNAs containing at least one exon-junction complex (EJC), promoting the interaction between upf1 and upf2. The CBC complex is also involved in 'failsafe' NMD, which is independent of the EJC complex, while it does not participate in Staufen-mediated mRNA decay (SMD). During cell proliferation, the CBC complex is also involved in microRNAs (miRNAs) biogenesis via its interaction with srrt/ars2, thereby being required for miRNA-mediated RNA interference. The CBC complex also acts as a negative regulator of parn, thereby acting as an inhibitor of mRNA deadenylation. In the CBC complex, ncbp2/cbp20 recognizes and binds capped RNAs (m7GpppG-capped RNA) but requires ncbp1/cbp80 to stabilize the movement of its N-terminal loop and lock the CBC into a high affinity cap-binding state with the cap structure. The conventional cap-binding complex with NCBP2 binds both small nuclear RNA (snRNA) and messenger (mRNA) and is involved in their export from the nucleus. The protein is Nuclear cap-binding protein subunit 2 (ncbp2) of Xenopus tropicalis (Western clawed frog).